The chain runs to 164 residues: Large ribosomal subunit protein uL23 (164 aa).

Positions 1-41 (MPAKAASAAASKKNSAPKSAVSKKVAKKGAPAAAAKPTKVV) are disordered.

The protein belongs to the universal ribosomal protein uL23 family.

Its function is as follows. This protein binds to a specific region on the 26S rRNA. The protein is Large ribosomal subunit protein uL23 (RPL23A) of Trypanosoma brucei brucei.